Consider the following 393-residue polypeptide: uncharacterized protein (393 aa).

Residues 1-17 (MVSKDQTSFNKRWTLGL) are Cytoplasmic-facing. Residues 18 to 38 (LMLGLVIILWVLSSFLINLIF) form a helical membrane-spanning segment. The Vacuolar portion of the chain corresponds to 39 to 46 (EDDSYRKP). The helical transmembrane segment at 47-67 (FFITYTNTAAFIFYLFPTAKA) threads the bilayer. The Cytoplasmic portion of the chain corresponds to 68-132 (VVVNYKDTGR…LYETIKLSAE (65 aa)). Ser93 carries the post-translational modification Phosphoserine. Residues 133 to 153 (FCILWFTANLVTNASLAFTSV) form a helical membrane-spanning segment. At 154–156 (ASQ) the chain is on the vacuolar side. A helical transmembrane segment spans residues 157–176 (TILSTTSSFFTLFIGAICHV). The Cytoplasmic portion of the chain corresponds to 177-182 (ESLSKS). A helical transmembrane segment spans residues 183-200 (KVLGSFISFVGIIMVTKS). At 201–219 (DSHQRYQRHIADVSGDDND) the chain is on the vacuolar side. Residues 220-240 (AVQVLIGNLLALAGAVLYGVY) traverse the membrane as a helical segment. Residues 241–257 (STLLKREVGDETRVNMK) are Cytoplasmic-facing. The chain crosses the membrane as a helical span at residues 258–278 (IFFGFVGLFNLLFLWPSLIVL). Residues 279-292 (DFFGWEPFSLPKDP) are Vacuolar-facing. A helical membrane pass occupies residues 293–313 (KVVVIIFVNCLITFVSDFCWA). Topologically, residues 314–321 (KAMLLTSP) are cytoplasmic. The chain crosses the membrane as a helical span at residues 322 to 342 (LTVTVGLSITIPLAMFGDVIF). Over 343-345 (KHK) the chain is Vacuolar. The chain crosses the membrane as a helical span at residues 346–366 (TMSALYLFGATLILGSFFIIN). Topologically, residues 367 to 393 (KSSEEEHFENSITASNYESVEVPAANN) are cytoplasmic.

The protein belongs to the TPT transporter family.

It localises to the vacuole membrane. This is an uncharacterized protein from Saccharomyces cerevisiae (strain ATCC 204508 / S288c) (Baker's yeast).